The following is a 514-amino-acid chain: Exoglucanase 1 (514 aa).

A signal peptide spans 1–17 (MYQKLALISAFLATARA). Residues 18–453 (QSACTLQAET…GSTGNSSGGN (436 aa)) form a catalytic region. Cystine bridges form between cysteine 21-cysteine 89, cysteine 36-cysteine 42, cysteine 67-cysteine 88, cysteine 78-cysteine 84, cysteine 155-cysteine 414, cysteine 189-cysteine 227, cysteine 193-cysteine 226, cysteine 247-cysteine 273, cysteine 255-cysteine 260, and cysteine 278-cysteine 348. 2 N-linked (GlcNAc...) asparagine glycosylation sites follow: asparagine 62 and asparagine 81. Glutamate 229 acts as the Nucleophile in catalysis. Glutamate 234 (proton donor) is an active-site residue. Residue asparagine 287 is glycosylated (N-linked (GlcNAc...) asparagine). Disordered stretches follow at residues 401 to 427 (NETS…LESN) and 444 to 481 (GSTG…PTQT). The segment at 454-478 (PPGGNPPGTTTTRRPATSTGSSPGP) is linker. Residues 460–479 (PGTTTTRRPATSTGSSPGPT) show a composition bias toward low complexity. The 37-residue stretch at 478–514 (PTQTHYGQCGGIGYSGPTVCASGSTCQVLNPYYSQCL) folds into the CBM1 domain. Intrachain disulfides connect cysteine 486–cysteine 503 and cysteine 497–cysteine 513.

It belongs to the glycosyl hydrolase 7 (cellulase C) family.

The catalysed reaction is Hydrolysis of (1-&gt;4)-beta-D-glucosidic linkages in cellulose and cellotetraose, releasing cellobiose from the non-reducing ends of the chains.. Functionally, the biological conversion of cellulose to glucose generally requires three types of hydrolytic enzymes: (1) Endoglucanases which cut internal beta-1,4-glucosidic bonds; (2) Exocellobiohydrolases that cut the disaccharide cellobiose from the non-reducing end of the cellulose polymer chain; (3) Beta-1,4-glucosidases which hydrolyze the cellobiose and other short cello-oligosaccharides to glucose. This Hypocrea rufa (Trichoderma viride) protein is Exoglucanase 1 (cbh1).